The primary structure comprises 232 residues: Lipoprotein-releasing system ATP-binding protein LolD 1 (232 aa).

Residues 11-231 (VYLHDVKRQY…SIQDGLVVEL (221 aa)) enclose the ABC transporter domain. 47–54 (APSGAGKS) contributes to the ATP binding site.

This sequence belongs to the ABC transporter superfamily. Lipoprotein translocase (TC 3.A.1.125) family. As to quaternary structure, the complex is composed of two ATP-binding proteins (LolD) and two transmembrane proteins (LolC and LolE).

It localises to the cell inner membrane. Functionally, part of the ABC transporter complex LolCDE involved in the translocation of mature outer membrane-directed lipoproteins, from the inner membrane to the periplasmic chaperone, LolA. Responsible for the formation of the LolA-lipoprotein complex in an ATP-dependent manner. This Rhodopseudomonas palustris (strain BisB18) protein is Lipoprotein-releasing system ATP-binding protein LolD 1.